The following is a 362-amino-acid chain: Dihydroorotate dehydrogenase (quinone) (362 aa).

Residues alanine 62–lysine 66 and threonine 86 contribute to the FMN site. Position 66 (lysine 66) interacts with substrate. Asparagine 111–phenylalanine 115 contacts substrate. 2 residues coordinate FMN: asparagine 139 and asparagine 170. Asparagine 170 contributes to the substrate binding site. Residue serine 173 is the Nucleophile of the active site. Substrate is bound at residue asparagine 175. 2 residues coordinate FMN: lysine 215 and serine 243. Residue asparagine 244–threonine 245 participates in substrate binding. Residues glycine 266, glycine 295, and tyrosine 316 to serine 317 contribute to the FMN site.

Belongs to the dihydroorotate dehydrogenase family. Type 2 subfamily. Monomer. Requires FMN as cofactor.

The protein resides in the cell membrane. It carries out the reaction (S)-dihydroorotate + a quinone = orotate + a quinol. Its pathway is pyrimidine metabolism; UMP biosynthesis via de novo pathway; orotate from (S)-dihydroorotate (quinone route): step 1/1. Functionally, catalyzes the conversion of dihydroorotate to orotate with quinone as electron acceptor. The sequence is that of Dihydroorotate dehydrogenase (quinone) from Rhizobium johnstonii (strain DSM 114642 / LMG 32736 / 3841) (Rhizobium leguminosarum bv. viciae).